The chain runs to 499 residues: Probable cytosol aminopeptidase (499 aa).

Mn(2+) is bound by residues K269 and D274. Residue K281 is part of the active site. Residues D292, D351, and E353 each contribute to the Mn(2+) site. R355 is an active-site residue.

Belongs to the peptidase M17 family. Mn(2+) is required as a cofactor.

It localises to the cytoplasm. The catalysed reaction is Release of an N-terminal amino acid, Xaa-|-Yaa-, in which Xaa is preferably Leu, but may be other amino acids including Pro although not Arg or Lys, and Yaa may be Pro. Amino acid amides and methyl esters are also readily hydrolyzed, but rates on arylamides are exceedingly low.. It carries out the reaction Release of an N-terminal amino acid, preferentially leucine, but not glutamic or aspartic acids.. Presumably involved in the processing and regular turnover of intracellular proteins. Catalyzes the removal of unsubstituted N-terminal amino acids from various peptides. The chain is Probable cytosol aminopeptidase from Actinobacillus pleuropneumoniae serotype 3 (strain JL03).